A 693-amino-acid chain; its full sequence is MLPARLACGLLCGLRRGPAPAAACYGPARWLLEGKCEVPIRQRASSLGRRVPPSSTATEDYAEGPDTEERFLFPEYVPERTPEEQVRELQELRELQQLQQEKERERLQQREERLQQKLRAGFRTLPVPEFPDASVPPSGIYCSGCGAELHCQHPGLPGYLPEEKFRDAAQAEGGPARTVCQRCWLLVHHGRALRLQVSRDQYLELVSAALRRPGPALVLYMVNLLDLPDALLPDLPKLVGPKQLIVLGNKVDLLPQDAPGYLKRLRKRLWDDCIRAGLVVAPGHQGPQYPAGDEPLEEIKNQNPSSRSRTVVKDVRLISAKTGYGVEEMISALQRSWRYRGDVYLVGTTNAGKSTLFNTLLESDYCTAKGSEAIDRATISPWPGTTLNLLKFPICNPTPYRMFKRQRRLQEDATKAEEDLSEEEQSQLNQLKKHGYIVGRVGRTFSYSREQDEVPFEFDADSLAFDMGSEPVVSVCKSTKQIELTPEDVKDAHWFYDTPGITKESCILNLLTEKEINTVLPTHSIIPRTFVLKPGMVLFLGGIARIDFLQGNQSAWFTVVASNFLPVHITSLDKADALYEKHAGHELLLVPMGGKERMAQFPPLVAEDITLKGGGKFEAVADIKFSSAGWVAVTPYSEGTLHLRGHTPEGTALTVHPPVLPYIVNVKGQRMKKSVAYKTKKPPSLVHNLKKHR.

The interval 43–67 (RASSLGRRVPPSSTATEDYAEGPDT) is disordered. At Tyr-76 the chain carries Phosphotyrosine. Residues 203 to 504 (LELVSAALRR…FYDTPGITKE (302 aa)) form the CP-type G domain. The segment at 286–307 (GPQYPAGDEPLEEIKNQNPSSR) is disordered.

This sequence belongs to the TRAFAC class YlqF/YawG GTPase family. NOA1 subfamily. Homodimer or multimer. Interacts with mitochondrial complex I, DAP3, MRPL12 and MRPS27. As to expression, expressed in tissues associated with high mitochondria content including testes, heart, liver, brain and thymus. Also expressed in various bone cell lines.

It is found in the mitochondrion inner membrane. Its function is as follows. Involved in regulation of mitochondrial protein translation and respiration. Plays a role in mitochondria-mediated cell death. May act as a scaffolding protein or stabilizer of respiratory chain supercomplexes. Binds GTP. The chain is Nitric oxide-associated protein 1 (Noa1) from Mus musculus (Mouse).